Here is an 864-residue protein sequence, read N- to C-terminus: Leucine--tRNA ligase (864 aa).

The 'HIGH' region signature appears at 42–52 (PYPSGKLHMGH). The 'KMSKS' region signature appears at 619 to 623 (KMSKS). Lys-622 contributes to the ATP binding site.

Belongs to the class-I aminoacyl-tRNA synthetase family.

The protein resides in the cytoplasm. The catalysed reaction is tRNA(Leu) + L-leucine + ATP = L-leucyl-tRNA(Leu) + AMP + diphosphate. This chain is Leucine--tRNA ligase, found in Wigglesworthia glossinidia brevipalpis.